We begin with the raw amino-acid sequence, 424 residues long: UDP-N-acetylglucosamine 1-carboxyvinyltransferase (424 aa).

A phosphoenolpyruvate-binding site is contributed by 22-23 (KN). Arg93 is a binding site for UDP-N-acetyl-alpha-D-glucosamine. Catalysis depends on Cys117, which acts as the Proton donor. The residue at position 117 (Cys117) is a 2-(S-cysteinyl)pyruvic acid O-phosphothioketal. Residues 122-126 (RPIDL), Asp307, and Val329 contribute to the UDP-N-acetyl-alpha-D-glucosamine site.

Belongs to the EPSP synthase family. MurA subfamily.

It localises to the cytoplasm. The enzyme catalyses phosphoenolpyruvate + UDP-N-acetyl-alpha-D-glucosamine = UDP-N-acetyl-3-O-(1-carboxyvinyl)-alpha-D-glucosamine + phosphate. Its pathway is cell wall biogenesis; peptidoglycan biosynthesis. Its function is as follows. Cell wall formation. Adds enolpyruvyl to UDP-N-acetylglucosamine. The protein is UDP-N-acetylglucosamine 1-carboxyvinyltransferase of Chlorobium luteolum (strain DSM 273 / BCRC 81028 / 2530) (Pelodictyon luteolum).